A 238-amino-acid polypeptide reads, in one-letter code: uncharacterized protein (238 aa).

The signal sequence occupies residues 1–28; it reads MSRNSRGSGRYVFVVLACVFGYTRAVHA.

This is an uncharacterized protein from Treponema pallidum (strain Nichols).